Reading from the N-terminus, the 204-residue chain is MGHERALARAGLGPVAGCDEAGRGACAGPLVAAAVILDDRRSGRIAGLADSKTLSAAKREALFNVIMDKALAVSWVRVEADECDRLGMQEADISGLRRAVVRLGVEPGYVLSDGFPVDGLTVPDLGMWKGDSVCACVAAASIVAKVARDRIMIAMDAEIPGYDFAVHKGYATALHQRRLKELGPSRQHRMSYANVRRAARLHSS.

The RNase H type-2 domain maps to 13-204; that stretch reads GPVAGCDEAG…VRRAARLHSS (192 aa). Asp19, Glu20, and Asp113 together coordinate a divalent metal cation.

It belongs to the RNase HII family. The cofactor is Mn(2+). Mg(2+) is required as a cofactor.

The protein resides in the cytoplasm. The enzyme catalyses Endonucleolytic cleavage to 5'-phosphomonoester.. Endonuclease that specifically degrades the RNA of RNA-DNA hybrids. The sequence is that of Ribonuclease HII from Cutibacterium acnes (strain DSM 16379 / KPA171202) (Propionibacterium acnes).